The following is a 469-amino-acid chain: Glutamate--tRNA ligase (469 aa).

The short motif at 11–21 (PSPTGFIHLGN) is the 'HIGH' region element. The short motif at 243 to 247 (KMSKR) is the 'KMSKS' region element. Lysine 246 contacts ATP.

The protein belongs to the class-I aminoacyl-tRNA synthetase family. Glutamate--tRNA ligase type 1 subfamily. Monomer.

Its subcellular location is the cytoplasm. The catalysed reaction is tRNA(Glu) + L-glutamate + ATP = L-glutamyl-tRNA(Glu) + AMP + diphosphate. In terms of biological role, catalyzes the attachment of glutamate to tRNA(Glu) in a two-step reaction: glutamate is first activated by ATP to form Glu-AMP and then transferred to the acceptor end of tRNA(Glu). The sequence is that of Glutamate--tRNA ligase from Burkholderia cenocepacia (strain ATCC BAA-245 / DSM 16553 / LMG 16656 / NCTC 13227 / J2315 / CF5610) (Burkholderia cepacia (strain J2315)).